Reading from the N-terminus, the 105-residue chain is Host transcription reprogramming factor 7 (105 aa).

Residues 1-19 form the signal peptide; that stretch reads MKTKTIFQLVALFAIGATA. Residues 69–95 form a C2H2-type zinc finger; sequence YWCRIGNCNAAFKSLAARCRHEKTAVH.

The protein resides in the secreted. The protein localises to the host nucleus. Functionally, probable secreted effector that translocates into the nuclei of host cells to reprogram the expression of targeted genes by binding on effector binding elements in rice. In Pyricularia oryzae (strain 70-15 / ATCC MYA-4617 / FGSC 8958) (Rice blast fungus), this protein is Host transcription reprogramming factor 7.